A 452-amino-acid chain; its full sequence is Probable cysteine protease RD21C (452 aa).

Positions methionine 1 to alanine 29 are cleaved as a signal peptide. Residues threonine 30–serine 128 constitute a propeptide, activation peptide. A glycan (N-linked (GlcNAc...) asparagine) is linked at asparagine 82. 5 disulfide bridges follow: cysteine 150–cysteine 192, cysteine 184–cysteine 226, cysteine 284–cysteine 335, cysteine 363–cysteine 375, and cysteine 369–cysteine 390. Cysteine 153 is an active-site residue. Catalysis depends on residues histidine 290 and asparagine 310. Positions lysine 346–alanine 452 are cleaved as a propeptide — removed in mature form.

It belongs to the peptidase C1 family. In terms of assembly, interacts with WSCP.

In terms of biological role, probable thiol protease. This Arabidopsis thaliana (Mouse-ear cress) protein is Probable cysteine protease RD21C.